The primary structure comprises 339 residues: Methionine import ATP-binding protein MetN 1 (339 aa).

Residues 2-241 enclose the ABC transporter domain; it reads ISFNNVSKVY…PKTKTTQNFV (240 aa). 38–45 provides a ligand contact to ATP; the sequence is GFSGAGKS.

This sequence belongs to the ABC transporter superfamily. Methionine importer (TC 3.A.1.24) family. The complex is composed of two ATP-binding proteins (MetN), two transmembrane proteins (MetI) and a solute-binding protein (MetQ).

It localises to the cell membrane. It catalyses the reaction L-methionine(out) + ATP + H2O = L-methionine(in) + ADP + phosphate + H(+). It carries out the reaction D-methionine(out) + ATP + H2O = D-methionine(in) + ADP + phosphate + H(+). Part of the ABC transporter complex MetNIQ involved in methionine import. Responsible for energy coupling to the transport system. This is Methionine import ATP-binding protein MetN 1 from Bacillus thuringiensis subsp. konkukian (strain 97-27).